A 467-amino-acid chain; its full sequence is Cilia- and flagella-associated protein 97 (467 aa).

Disordered regions lie at residues Met1–Ser20, Ile76–Pro235, Arg336–Gln370, and Ala412–Gln467. Residues Asp124–Glu135 are compositionally biased toward acidic residues. Positions Asp162–Thr177 are enriched in polar residues. Low complexity predominate over residues Asp180–Ser194. The span at Ser198–Glu216 shows a compositional bias: basic and acidic residues. The span at Thr223–Pro235 shows a compositional bias: polar residues. The stretch at Lys310–Lys387 forms a coiled coil. Low complexity predominate over residues Ser421–Ser439.

It belongs to the CFAP97 family.

This Xenopus tropicalis (Western clawed frog) protein is Cilia- and flagella-associated protein 97.